A 156-amino-acid chain; its full sequence is Small ribosomal subunit protein uS7 (156 aa).

The protein belongs to the universal ribosomal protein uS7 family. As to quaternary structure, part of the 30S ribosomal subunit. Contacts proteins S9 and S11.

One of the primary rRNA binding proteins, it binds directly to 16S rRNA where it nucleates assembly of the head domain of the 30S subunit. Is located at the subunit interface close to the decoding center, probably blocks exit of the E-site tRNA. In Geobacillus kaustophilus (strain HTA426), this protein is Small ribosomal subunit protein uS7.